The following is a 708-amino-acid chain: MKEWRRNILGRELVVQYGKVAKQSSGSALVRFGDTVVLATANISDKAVEGIDFVPLTVEFQERFYAAGKIPGGFIKREGKPSESAILSARLIDRPIRPLFPKKLRNEVQVIVTVLSVDPNVPPDVVGIFAASLALNVSKIPFEGIVAGIRVGYRDGQFIALPSEEDIEKGLMDITVAGTKDAVTMVEGEAKEVAEEDMVKALRFAHSVIKELVDFQEEILSEFNVEKIPVVEPTPPEGLVEAFKDLLNKEELERRILVKVKKEREVALKEYEEQLLNQIAEKLSVTDLEGIKPFVSELYEDAVKKTMRRLIVEKGIRADGRKPTEIRPISCEVGLFPRTHGSALFTRGETQSLGIVTLGAPMDVQIIDTLLEEGVKRFMLHYNFPPFCTGEVKPLRGPSRREIGHGHLAERALKNMLPPEEEFPYTIRVVSEILESNGSSSMATVCSGSLALMDAGVPIKKHVAGIAMGLILEEDAEIILTDIIGMEDHYGDMDFKVAGTRDGITAFQMDCKVSGVSDELLMKALMQAREARMYILDRMYETISAPRPHLSKYAPIIKVTKVDPEKVADVIGPGGRVIKKIIKDFDVKVEIDDETGLVKVVGSSEENVDKAIELIREIAKEIEVGEVLEGKVTRIEPYGLFIEVRPGKIGLLHQSKVGEDMRQFLKKVKVGDTIKVQVINIDDLGRLQFKRVTEGENTQHGKTHSKRN.

2 residues coordinate Mg(2+): D488 and D494. A KH domain is found at 555-615; that stretch reads PIIKVTKVDP…ENVDKAIELI (61 aa). The region spanning 625–692 is the S1 motif domain; sequence GEVLEGKVTR…DLGRLQFKRV (68 aa).

This sequence belongs to the polyribonucleotide nucleotidyltransferase family. Mg(2+) is required as a cofactor.

It is found in the cytoplasm. The catalysed reaction is RNA(n+1) + phosphate = RNA(n) + a ribonucleoside 5'-diphosphate. Involved in mRNA degradation. Catalyzes the phosphorolysis of single-stranded polyribonucleotides processively in the 3'- to 5'-direction. This Thermotoga petrophila (strain ATCC BAA-488 / DSM 13995 / JCM 10881 / RKU-1) protein is Polyribonucleotide nucleotidyltransferase.